The following is an 86-amino-acid chain: Weak toxin 3 (86 aa).

The signal sequence occupies residues 1-23 (MKTLLLTLVVVTIVCLDLGYTLT). Intrachain disulfides connect C24–C45, C27–C32, C38–C63, C67–C78, and C79–C84.

The protein belongs to the three-finger toxin family. Ancestral subfamily. Orphan group II sub-subfamily. Expressed by the venom gland.

Its subcellular location is the secreted. Binds with low affinity to muscular (alpha-1-beta-1-delta-epsilon/CHRNA1-CHRNB1-CHRND-CHRNE) and very low affinity to neuronal (alpha-7/CHRNA7) nicotinic acetylcholine receptor (nAChR). In Bungarus candidus (Malayan krait), this protein is Weak toxin 3.